A 248-amino-acid chain; its full sequence is 23S rRNA (guanosine-2'-O-)-methyltransferase RlmB (248 aa).

3 residues coordinate S-adenosyl-L-methionine: Gly198, Leu218, and Leu227.

It belongs to the class IV-like SAM-binding methyltransferase superfamily. RNA methyltransferase TrmH family. RlmB subfamily.

The protein localises to the cytoplasm. The enzyme catalyses guanosine(2251) in 23S rRNA + S-adenosyl-L-methionine = 2'-O-methylguanosine(2251) in 23S rRNA + S-adenosyl-L-homocysteine + H(+). In terms of biological role, specifically methylates the ribose of guanosine 2251 in 23S rRNA. In Pseudomonas putida (strain ATCC 47054 / DSM 6125 / CFBP 8728 / NCIMB 11950 / KT2440), this protein is 23S rRNA (guanosine-2'-O-)-methyltransferase RlmB.